Reading from the N-terminus, the 374-residue chain is Trehalose-phosphate phosphatase B (374 aa).

Belongs to the trehalose phosphatase family. It depends on a divalent metal cation as a cofactor. In terms of tissue distribution, expressed in flowers.

It carries out the reaction alpha,alpha-trehalose 6-phosphate + H2O = alpha,alpha-trehalose + phosphate. It participates in glycan biosynthesis; trehalose biosynthesis. Removes the phosphate from trehalose 6-phosphate to produce free trehalose. Trehalose accumulation in plant may improve abiotic stress tolerance. The protein is Trehalose-phosphate phosphatase B (TPPB) of Arabidopsis thaliana (Mouse-ear cress).